A 96-amino-acid polypeptide reads, in one-letter code: Fluoride-specific ion channel FluC 1 (96 aa).

Transmembrane regions (helical) follow at residues 4–24 and 26–46; these read LIQG…RLAL and LWLG…AFLM. G61 and T64 together coordinate Na(+). The chain crosses the membrane as a helical span at residues 69–89; that stretch reads MMLNDVSFYFFTAVGCILAWL.

The protein belongs to the fluoride channel Fluc/FEX (TC 1.A.43) family.

Its subcellular location is the cell membrane. The enzyme catalyses fluoride(in) = fluoride(out). Its activity is regulated as follows. Na(+) is not transported, but it plays an essential structural role and its presence is essential for fluoride channel function. Fluoride-specific ion channel. Important for reducing fluoride concentration in the cell, thus reducing its toxicity. The polypeptide is Fluoride-specific ion channel FluC 1 (Corynebacterium glutamicum (strain ATCC 13032 / DSM 20300 / JCM 1318 / BCRC 11384 / CCUG 27702 / LMG 3730 / NBRC 12168 / NCIMB 10025 / NRRL B-2784 / 534)).